The chain runs to 963 residues: Phosphoenolpyruvate carboxylase 2 (963 aa).

A Phosphoserine modification is found at Ser-11. Active-site residues include His-172 and Lys-599. Ser-701 carries the post-translational modification Phosphoserine.

Belongs to the PEPCase type 1 family. In terms of assembly, homotetramer. The cofactor is Mg(2+). Expressed in all plant organs, with higher levels in stems and leaves.

Its subcellular location is the cytoplasm. The catalysed reaction is oxaloacetate + phosphate = phosphoenolpyruvate + hydrogencarbonate. With respect to regulation, by light-reversible phosphorylation. Functionally, through the carboxylation of phosphoenolpyruvate (PEP) it forms oxaloacetate, a four-carbon dicarboxylic acid source for the tricarboxylic acid cycle. This is Phosphoenolpyruvate carboxylase 2 (PPC2) from Arabidopsis thaliana (Mouse-ear cress).